Consider the following 63-residue polypeptide: Large ribosomal subunit protein bL28c (63 aa).

It belongs to the bacterial ribosomal protein bL28 family.

It localises to the plastid. The protein localises to the chloroplast. This Pyropia yezoensis (Susabi-nori) protein is Large ribosomal subunit protein bL28c.